The following is a 399-amino-acid chain: Long-chain primary alcohol dehydrogenase AdhA (399 aa).

Belongs to the iron-containing alcohol dehydrogenase family. In terms of assembly, homotetramer. It depends on Zn(2+) as a cofactor.

The enzyme catalyses a primary alcohol + NADP(+) = an aldehyde + NADPH + H(+). Its function is as follows. Alcohol dehydrogenase active against primary long-chain alcohols. Pentan-1-ol is the optimum substrate in vitro, but also shows efficient dehydrogenase activity on propanol, hexanol, and ethanol. The polypeptide is Long-chain primary alcohol dehydrogenase AdhA (adhA) (Thermoanaerobacter ethanolicus (Clostridium thermohydrosulfuricum)).